A 508-amino-acid polypeptide reads, in one-letter code: Photosystem II CP47 reaction center protein (508 aa).

Helical transmembrane passes span 21-36 (SVHI…WAGS), 101-115 (IMLS…IWHW), 140-156 (GIHL…FGAF), 203-218 (IAAG…FHLS), 237-252 (VLSS…AFVV), and 457-472 (SFAL…HGAR).

Belongs to the PsbB/PsbC family. PsbB subfamily. As to quaternary structure, PSII is composed of 1 copy each of membrane proteins PsbA, PsbB, PsbC, PsbD, PsbE, PsbF, PsbH, PsbI, PsbJ, PsbK, PsbL, PsbM, PsbT, PsbX, PsbY, PsbZ, Psb30/Ycf12, at least 3 peripheral proteins of the oxygen-evolving complex and a large number of cofactors. It forms dimeric complexes. Binds multiple chlorophylls. PSII binds additional chlorophylls, carotenoids and specific lipids. is required as a cofactor.

The protein localises to the plastid. It localises to the chloroplast thylakoid membrane. In terms of biological role, one of the components of the core complex of photosystem II (PSII). It binds chlorophyll and helps catalyze the primary light-induced photochemical processes of PSII. PSII is a light-driven water:plastoquinone oxidoreductase, using light energy to abstract electrons from H(2)O, generating O(2) and a proton gradient subsequently used for ATP formation. This chain is Photosystem II CP47 reaction center protein, found in Piper cenocladum (Ant piper).